The sequence spans 361 residues: Myricetin 3-O-methyltransferase 3 (361 aa).

Asp-229 contributes to the S-adenosyl-L-methionine binding site. The active-site Proton acceptor is His-267.

Belongs to the class I-like SAM-binding methyltransferase superfamily. Cation-independent O-methyltransferase family. Homodimer. In terms of tissue distribution, mainly expressed in leaves secreting glandular trichomes types 1 and 4 and, to a lesser extent, in storage trichomes type 6.

It carries out the reaction kaempferol + S-adenosyl-L-methionine = 3-O-methylkaempferol + S-adenosyl-L-homocysteine + H(+). The catalysed reaction is quercetin + S-adenosyl-L-methionine = 3',4',5,7-tetrahydroxy-3-methoxyflavone + S-adenosyl-L-homocysteine + H(+). It catalyses the reaction myricetin + S-adenosyl-L-methionine = 3-O-methylmyricetin + S-adenosyl-L-homocysteine + H(+). The enzyme catalyses kaempferide + S-adenosyl-L-methionine = 3,4'-O-dimethylkaempferol + S-adenosyl-L-homocysteine + H(+). It carries out the reaction isorhamnetin + S-adenosyl-L-methionine = 3,3'-O-dimethylquercetin + S-adenosyl-L-homocysteine + H(+). The catalysed reaction is rhamnetin + S-adenosyl-L-methionine = 3',4',5-trihydroxy-3,7-dimethoxyflavone + S-adenosyl-L-homocysteine + H(+). It catalyses the reaction laricitrin + S-adenosyl-L-methionine = 3,3'-O-dimethylmyricetin + S-adenosyl-L-homocysteine + H(+). The enzyme catalyses syringetin + S-adenosyl-L-methionine = 3,3',5'-O-trimethylmyricetin + S-adenosyl-L-homocysteine + H(+). It functions in the pathway flavonoid metabolism. In terms of biological role, flavonoid 3-O-methyltransferase involved in the biosynthesis of polymethoxylated flavonoids natural products such as myricetin derivatives, aroma compounds possessing antioxidant properties and exhibiting pharmacological activities such as anti-carcinogen, anti-viral, anti-thrombotic, anti-diabetic, anti-atherosclerotic, and anti-inflammatory effects. Catalyzes S-adenosylmethionine-dependent regioselective 3-O-methylation of flavonoids; active on various hydroxylated flavonoid substrates. Active with myricetin, quercetin, kaempferol, 4'-methyl kaempferol (kaempferide), 3'-methyl quercetin (isorhamnetin), 7-methyl quercetin (rhamnetin), 3'-methyl myricetin (laricitrin) and 3',5'-dimethyl myricetin (syringetin), thus producing 3-methyl myricetin, 3-methyl quercetin, 3-methyl kaempferol, 4',3-methyl kaempferol, 3',3-methyl quercetin, 7,3-dimethyl quercetin, 3',3-dimethyl myricetin and 3',5',3-dimethyl myricetin, respectively. Inactive with flavonol substrates methylated at the 3-hydroxyl position such as 3-O-methyl quercetin. In Solanum habrochaites (Wild tomato), this protein is Myricetin 3-O-methyltransferase 3.